The primary structure comprises 453 residues: Protein IVY1 (453 aa).

Over residues 1–16 (MPDNNTEQLQGSPSSD) the composition is skewed to polar residues. The segment at 1–20 (MPDNNTEQLQGSPSSDQRLR) is disordered. Serine 59, serine 84, and serine 85 each carry phosphoserine. Coiled coils occupy residues 102-122 (KRDV…SNAY) and 230-257 (IRNL…KHDF). Disordered stretches follow at residues 316–340 (DGPY…EETG) and 353–453 (TSQP…SSNI). Serine 335 carries the post-translational modification Phosphoserine. Residues 353 to 371 (TSQPSTSKTSLPKSKGSST) show a composition bias toward low complexity. Polar residues-rich tracts occupy residues 372 to 384 (VSTP…SSNK) and 404 to 429 (LMGT…TFKQ). Residues 431-442 (SIKEDNDNHSSD) show a composition bias toward basic and acidic residues. Residues 443–453 (TDGMQDQSSNI) are compositionally biased toward polar residues.

Homomultimer. Interacts with YPT7 and VPS33.

It localises to the vacuole membrane. Its function is as follows. May be required for vacuolar fusion. Overexpression leads to fragmentation of vacuoles, missorting of the vacuolar enzyme carboxypeptidase Y (CPY) to the exterior of the cell and accumulation of multivesicular bodies inside the cell. The chain is Protein IVY1 (IVY1) from Saccharomyces cerevisiae (strain ATCC 204508 / S288c) (Baker's yeast).